Here is a 523-residue protein sequence, read N- to C-terminus: Flavin-dependent halogenase armH5 (523 aa).

FAD is bound by residues Gly-17, Ala-20, and Glu-50. Residues Ser-328 and Gly-329 each contribute to the chloride site. Residue Val-330 coordinates FAD.

It belongs to the flavin-dependent halogenase family.

The enzyme catalyses melleolide F + FADH2 + chloride + O2 = 6'-chloromelleolide F + FAD + 2 H2O + H(+). Functionally, flavin-dependent halogenase involved in the biosynthesis of melleolides, a range of antifungal and phytotoxic polyketide derivatives composed of an orsellinic acid (OA) moiety esterified to various sesquiterpene alcohols. The halogenase catalyzes the transfer of a single chlorine atom to the melleolide backbone, resulting in a 6'-chloromelleolide product. The enzyme acts on free substrate and does not depend on carrier-protein-dependent acceptor molecules. The sequence is that of Flavin-dependent halogenase armH5 from Armillaria mellea (Honey mushroom).